The primary structure comprises 1013 residues: Antigenic heat-stable 120 kDa protein (1013 aa).

2 disordered regions span residues Asp-1 to Pro-73 and Gly-348 to Gln-396. The span at Glu-12–Glu-27 shows a compositional bias: basic and acidic residues. Positions Ser-47 to Ser-61 are enriched in low complexity. Polar residues-rich tracts occupy residues Gly-62 to Pro-73, Gly-348 to Gln-373, and Pro-380 to Gln-396.

It is found in the cytoplasm. This is Antigenic heat-stable 120 kDa protein (sca4) from Rickettsia rhipicephali.